A 956-amino-acid polypeptide reads, in one-letter code: Cytolysin RtxA (956 aa).

The cholesterol recognition/amino acid consensus (CRAC) region 1 stretch occupies residues 48-58 (LTIPKDYDIEK). Cholesterol recognition/amino acid consensus (CARC) region regions lie at residues 280-287 (KAISSYVL) and 340-348 (KFGYDGDSL). The cholesterol recognition/amino acid consensus (CRAC) region 2 stretch occupies residues 349 to 354 (LAEYQR). The tract at residues 444 to 453 (RHAHYLERNL) is cholesterol recognition/amino acid consensus (CARC) region 3. Lys-558 carries the N6-myristoyl lysine lipid modification. One copy of the Hemolysin-type calcium-binding 1 repeat lies at 613 to 639 (VNAGSGNDDIFAGQGKMNVDGGTGHDR). A lipid anchor (N6-myristoyl lysine) is attached at Lys-689. Hemolysin-type calcium-binding repeat units lie at residues 722-756 (GSQF…DDRL) and 757-791 (FGGN…GNDV).

The protein belongs to the RTX prokaryotic toxin (TC 1.C.11) family. Post-translationally, myristoylated by RtxC; the toxin only becomes active when modified. Mainly myristoylated; a very minor fraction is acylated with hydroxymyristoyl, lauroyl and palmitoleyl chains fatty acyl groups. Fatty acylation is involved in binding to host membranes and promotes the irreversible insertion of RtxA into the host cell membrane.

The protein resides in the secreted. Its subcellular location is the host cell membrane. In terms of biological role, bacterial cytolysin that attacks host cell membranes and causes cell rupture by forming a pore. Binds and permeabilizes target cells by forming cation-selective pores. Constitutes the key virulence cytotoxin of K.kingae. Binds cholesterol and oligosaccharides on the surface of host cells. Does not bind beta-2 integrin (ITGB2) on the host cell surface. The polypeptide is Cytolysin RtxA (Kingella kingae).